The chain runs to 162 residues: Ribose-5-phosphate isomerase B (162 aa).

D-ribulose 5-phosphate-binding positions include 11-12 (DH) and 70-74 (GSGNG). The active-site Proton acceptor is the Glu75. His102 acts as the Proton donor in catalysis. The D-ribulose 5-phosphate site is built by Asn103, Arg113, Arg137, and Arg141.

The protein belongs to the LacAB/RpiB family. Homodimer.

It catalyses the reaction aldehydo-D-ribose 5-phosphate = D-ribulose 5-phosphate. It participates in carbohydrate degradation; pentose phosphate pathway; D-ribose 5-phosphate from D-ribulose 5-phosphate (non-oxidative stage): step 1/1. Catalyzes the interconversion of ribulose-5-P and ribose-5-P. The sequence is that of Ribose-5-phosphate isomerase B from Mycobacterium leprae (strain TN).